A 637-amino-acid polypeptide reads, in one-letter code: Glutamate--cysteine ligase catalytic subunit (637 aa).

At Met1 the chain carries N-acetylmethionine. 2 positions are modified to phosphoserine: Ser5 and Ser8.

It belongs to the glutamate--cysteine ligase type 3 family. As to quaternary structure, heterodimer of a catalytic heavy chain and a regulatory light chain.

It carries out the reaction L-cysteine + L-glutamate + ATP = gamma-L-glutamyl-L-cysteine + ADP + phosphate + H(+). The catalysed reaction is (2S)-2-aminobutanoate + L-glutamate + ATP = gamma-L-glutamyl-(2S)-2-aminobutanoate + ADP + phosphate + H(+). It functions in the pathway sulfur metabolism; glutathione biosynthesis; glutathione from L-cysteine and L-glutamate: step 1/2. Its activity is regulated as follows. Feedback inhibition by glutathione. Its function is as follows. Catalyzes the ATP-dependent ligation of L-glutamate and L-cysteine and participates in the first and rate-limiting step in glutathione biosynthesis. The polypeptide is Glutamate--cysteine ligase catalytic subunit (Homo sapiens (Human)).